Here is a 280-residue protein sequence, read N- to C-terminus: Vitamin B12-binding protein (280 aa).

A signal peptide spans 1–27; the sequence is MMPLGLFPLPRAAAVLLISLLTLPAQA. Residues 30-277 enclose the Fe/B12 periplasmic-binding domain; the sequence is RVISLSPSTT…QMASIPTPVA (248 aa). A cyanocob(III)alamin-binding site is contributed by Tyr-57. Cys-190 and Cys-266 are joined by a disulfide.

The protein belongs to the BtuF family. The complex is composed of two ATP-binding proteins (BtuD), two transmembrane proteins (BtuC) and a solute-binding protein (BtuF).

The protein resides in the periplasm. Part of the ABC transporter complex BtuCDF involved in vitamin B12 import. Binds vitamin B12 and delivers it to the periplasmic surface of BtuC. In Yersinia pseudotuberculosis serotype O:3 (strain YPIII), this protein is Vitamin B12-binding protein.